Consider the following 115-residue polypeptide: uncharacterized protein (115 aa).

The next 3 membrane-spanning stretches (helical) occupy residues 10–30, 47–67, and 77–97; these read IAILVFLMVIGFFIFIGSFWL, ASGIILTIFPNINSWFNATVA, and VHFFIPVGFGLLFGLIIAIIV.

The protein localises to the cell membrane. This is an uncharacterized protein from Mycoplasma genitalium (strain ATCC 33530 / DSM 19775 / NCTC 10195 / G37) (Mycoplasmoides genitalium).